Reading from the N-terminus, the 20-residue chain is Transcriptional regulatory protein PufK (20 aa).

Over residues 1–11 (MVPYRNPRHQH) the composition is skewed to basic residues. A disordered region spans residues 1 to 20 (MVPYRNPRHQHVASVLRSGG).

In terms of biological role, involved in the transcriptional regulation of pufB. This is Transcriptional regulatory protein PufK (pufK) from Cereibacter sphaeroides (strain ATCC 17023 / DSM 158 / JCM 6121 / CCUG 31486 / LMG 2827 / NBRC 12203 / NCIMB 8253 / ATH 2.4.1.) (Rhodobacter sphaeroides).